We begin with the raw amino-acid sequence, 493 residues long: Non-cyanogenic beta-glucosidase (493 aa).

An N-terminal signal peptide occupies residues 1 to 18; that stretch reads MDFIVAIFALFVISSFTI. Asn-34 is a glycosylation site (N-linked (GlcNAc...) asparagine). Residues Gln-54, His-158, and 203–204 each bind a beta-D-glucoside; that span reads NE. The active-site Proton donor is Glu-204. The N-linked (GlcNAc...) asparagine glycan is linked to Asn-335. A beta-D-glucoside is bound at residue Tyr-346. N-linked (GlcNAc...) asparagine glycosylation is found at Asn-371 and Asn-412. Residues Glu-422, Trp-471, 478–479, and Phe-487 each bind a beta-D-glucoside; that span reads EW. Residue Glu-422 is the Nucleophile of the active site.

Belongs to the glycosyl hydrolase 1 family. In terms of tissue distribution, leaves.

The catalysed reaction is Hydrolysis of terminal, non-reducing beta-D-glucosyl residues with release of beta-D-glucose.. The protein is Non-cyanogenic beta-glucosidase of Trifolium repens (Creeping white clover).